A 370-amino-acid chain; its full sequence is Dual-specificity RNA methyltransferase RlmN (370 aa).

Glu93 (proton acceptor) is an active-site residue. In terms of domain architecture, Radical SAM core spans 99–337 (EEGRGTLCVS…VTTVRKTRGD (239 aa)). Cysteines 106 and 343 form a disulfide. [4Fe-4S] cluster-binding residues include Cys113, Cys117, and Cys120. S-adenosyl-L-methionine is bound by residues 167–168 (GE), Ser199, 221–223 (SLH), and Asn300. The active-site S-methylcysteine intermediate is Cys343.

It belongs to the radical SAM superfamily. RlmN family. [4Fe-4S] cluster serves as cofactor.

It localises to the cytoplasm. It catalyses the reaction adenosine(2503) in 23S rRNA + 2 reduced [2Fe-2S]-[ferredoxin] + 2 S-adenosyl-L-methionine = 2-methyladenosine(2503) in 23S rRNA + 5'-deoxyadenosine + L-methionine + 2 oxidized [2Fe-2S]-[ferredoxin] + S-adenosyl-L-homocysteine. The enzyme catalyses adenosine(37) in tRNA + 2 reduced [2Fe-2S]-[ferredoxin] + 2 S-adenosyl-L-methionine = 2-methyladenosine(37) in tRNA + 5'-deoxyadenosine + L-methionine + 2 oxidized [2Fe-2S]-[ferredoxin] + S-adenosyl-L-homocysteine. Functionally, specifically methylates position 2 of adenine 2503 in 23S rRNA and position 2 of adenine 37 in tRNAs. m2A2503 modification seems to play a crucial role in the proofreading step occurring at the peptidyl transferase center and thus would serve to optimize ribosomal fidelity. This Francisella tularensis subsp. novicida (strain U112) protein is Dual-specificity RNA methyltransferase RlmN.